A 213-amino-acid polypeptide reads, in one-letter code: Validoxylamine A 7'-phosphate phosphatase (213 aa).

The active-site Nucleophile is D8. Residues D8 and D10 each contribute to the a divalent metal cation site. Residues D8–D10, T107–S108, and K140 each bind substrate. Catalysis depends on D10, which acts as the Proton donor. Residue D165 coordinates a divalent metal cation.

It belongs to the HAD-like hydrolase superfamily. CbbY/CbbZ/Gph/YieH family. Requires Mg(2+) as cofactor. The cofactor is Mn(2+). Co(2+) serves as cofactor.

It catalyses the reaction validoxylamine A 7'-phosphate + H2O = validoxylamine A + phosphate. Involved in the biosynthesis of the antifungal agent validamycin A. Catalyzes the dephosphorylation of validoxylamine A 7'-phosphate to yield validoxylamine A. VldH is also able to convert trehalose 6-phosphate to trehalose. The protein is Validoxylamine A 7'-phosphate phosphatase of Streptomyces hygroscopicus subsp. limoneus.